The sequence spans 231 residues: 5'-methylthioadenosine/S-adenosylhomocysteine nucleosidase (231 aa).

The Proton acceptor role is filled by Glu13. Residues Gly79, Met153, and 174–175 (ME) each bind substrate. Asp198 functions as the Proton donor in the catalytic mechanism.

This sequence belongs to the PNP/UDP phosphorylase family. MtnN subfamily.

It carries out the reaction S-adenosyl-L-homocysteine + H2O = S-(5-deoxy-D-ribos-5-yl)-L-homocysteine + adenine. The enzyme catalyses S-methyl-5'-thioadenosine + H2O = 5-(methylsulfanyl)-D-ribose + adenine. The catalysed reaction is 5'-deoxyadenosine + H2O = 5-deoxy-D-ribose + adenine. The protein operates within amino-acid biosynthesis; L-methionine biosynthesis via salvage pathway; S-methyl-5-thio-alpha-D-ribose 1-phosphate from S-methyl-5'-thioadenosine (hydrolase route): step 1/2. Functionally, catalyzes the irreversible cleavage of the glycosidic bond in both 5'-methylthioadenosine (MTA) and S-adenosylhomocysteine (SAH/AdoHcy) to adenine and the corresponding thioribose, 5'-methylthioribose and S-ribosylhomocysteine, respectively. Also cleaves 5'-deoxyadenosine, a toxic by-product of radical S-adenosylmethionine (SAM) enzymes, into 5-deoxyribose and adenine. This chain is 5'-methylthioadenosine/S-adenosylhomocysteine nucleosidase, found in Halalkalibacterium halodurans (strain ATCC BAA-125 / DSM 18197 / FERM 7344 / JCM 9153 / C-125) (Bacillus halodurans).